The chain runs to 762 residues: PHD finger protein 20-like protein 1 (762 aa).

2 Tudor domains span residues 11–71 and 85–141; these read ITFE…LERP and VDFK…EDAK. Disordered regions lie at residues 178-231, 289-359, 383-411, 536-559, and 613-651; these read AKNK…TSSD, AEKK…CIKP, SVIN…RSQR, SLKL…EGTE, and LSGK…QHDY. The span at 193 to 211 shows a compositional bias: basic and acidic residues; it reads NKDKEERKWLKVPSKKEET. Composition is skewed to polar residues over residues 319–340 and 383–398; these read DISS…SSGK and SVIN…NSPR. Over residues 399 to 410 the composition is skewed to basic residues; the sequence is SYKHSQRRRRSQ. The span at 614–632 shows a compositional bias: basic and acidic residues; that stretch reads SGKKKEKEKEKKEKKEKDH. Over residues 633 to 647 the composition is skewed to basic residues; it reads KSKQKKKKKKKKKSK.

The protein resides in the nucleus. Its function is as follows. Is a negative regulator of proteasomal degradation of methylated proteins. Involved in the maintainance of pluripotency of embryonic stem cells. This Gallus gallus (Chicken) protein is PHD finger protein 20-like protein 1 (PHF20L1).